The following is a 155-amino-acid chain: 6,7-dimethyl-8-ribityllumazine synthase (155 aa).

Residues Phe18, 49 to 51 (ALE), and 75 to 77 (CVI) contribute to the 5-amino-6-(D-ribitylamino)uracil site. Residue 80 to 81 (ET) participates in (2S)-2-hydroxy-3-oxobutyl phosphate binding. The Proton donor role is filled by His83. Asn108 contributes to the 5-amino-6-(D-ribitylamino)uracil binding site. Arg122 is a binding site for (2S)-2-hydroxy-3-oxobutyl phosphate.

The protein belongs to the DMRL synthase family.

The enzyme catalyses (2S)-2-hydroxy-3-oxobutyl phosphate + 5-amino-6-(D-ribitylamino)uracil = 6,7-dimethyl-8-(1-D-ribityl)lumazine + phosphate + 2 H2O + H(+). It functions in the pathway cofactor biosynthesis; riboflavin biosynthesis; riboflavin from 2-hydroxy-3-oxobutyl phosphate and 5-amino-6-(D-ribitylamino)uracil: step 1/2. Its function is as follows. Catalyzes the formation of 6,7-dimethyl-8-ribityllumazine by condensation of 5-amino-6-(D-ribitylamino)uracil with 3,4-dihydroxy-2-butanone 4-phosphate. This is the penultimate step in the biosynthesis of riboflavin. The polypeptide is 6,7-dimethyl-8-ribityllumazine synthase (Bartonella henselae (strain ATCC 49882 / DSM 28221 / CCUG 30454 / Houston 1) (Rochalimaea henselae)).